The following is a 168-amino-acid chain: Cytolysin secretion protein (168 aa).

The protein is Cytolysin secretion protein (vvhB) of Vibrio vulnificus (strain CMCP6).